We begin with the raw amino-acid sequence, 427 residues long: Serine--tRNA ligase (427 aa).

231 to 233 (TAE) contributes to the L-serine binding site. 262 to 264 (RSE) serves as a coordination point for ATP. Glu-285 contacts L-serine. 349–352 (EISS) is a binding site for ATP. Ser-385 is a binding site for L-serine.

Belongs to the class-II aminoacyl-tRNA synthetase family. Type-1 seryl-tRNA synthetase subfamily. In terms of assembly, homodimer. The tRNA molecule binds across the dimer.

The protein localises to the cytoplasm. It catalyses the reaction tRNA(Ser) + L-serine + ATP = L-seryl-tRNA(Ser) + AMP + diphosphate + H(+). It carries out the reaction tRNA(Sec) + L-serine + ATP = L-seryl-tRNA(Sec) + AMP + diphosphate + H(+). The protein operates within aminoacyl-tRNA biosynthesis; selenocysteinyl-tRNA(Sec) biosynthesis; L-seryl-tRNA(Sec) from L-serine and tRNA(Sec): step 1/1. Its function is as follows. Catalyzes the attachment of serine to tRNA(Ser). Is also able to aminoacylate tRNA(Sec) with serine, to form the misacylated tRNA L-seryl-tRNA(Sec), which will be further converted into selenocysteinyl-tRNA(Sec). In Rhizobium etli (strain CIAT 652), this protein is Serine--tRNA ligase.